The sequence spans 155 residues: Ribosome maturation factor RimP (155 aa).

The protein belongs to the RimP family.

It is found in the cytoplasm. Functionally, required for maturation of 30S ribosomal subunits. This Listeria innocua serovar 6a (strain ATCC BAA-680 / CLIP 11262) protein is Ribosome maturation factor RimP.